Here is a 293-residue protein sequence, read N- to C-terminus: Bifunctional protein FolD (293 aa).

NADP(+)-binding positions include 165–167, Ser190, and Ile231; that span reads GRS.

Belongs to the tetrahydrofolate dehydrogenase/cyclohydrolase family. In terms of assembly, homodimer.

It catalyses the reaction (6R)-5,10-methylene-5,6,7,8-tetrahydrofolate + NADP(+) = (6R)-5,10-methenyltetrahydrofolate + NADPH. The enzyme catalyses (6R)-5,10-methenyltetrahydrofolate + H2O = (6R)-10-formyltetrahydrofolate + H(+). Its pathway is one-carbon metabolism; tetrahydrofolate interconversion. Catalyzes the oxidation of 5,10-methylenetetrahydrofolate to 5,10-methenyltetrahydrofolate and then the hydrolysis of 5,10-methenyltetrahydrofolate to 10-formyltetrahydrofolate. The chain is Bifunctional protein FolD from Parasynechococcus marenigrum (strain WH8102).